We begin with the raw amino-acid sequence, 66 residues long: Large ribosomal subunit protein bL35 (66 aa).

The span at 1-46 (MPKMKTHRASAKRFKRTGNGGLKRHHAFTGHRFHGKTKKQRRHLRK) shows a compositional bias: basic residues. The segment at 1–50 (MPKMKTHRASAKRFKRTGNGGLKRHHAFTGHRFHGKTKKQRRHLRKAAMV) is disordered.

It belongs to the bacterial ribosomal protein bL35 family.

The chain is Large ribosomal subunit protein bL35 from Lactobacillus delbrueckii subsp. bulgaricus (strain ATCC 11842 / DSM 20081 / BCRC 10696 / JCM 1002 / NBRC 13953 / NCIMB 11778 / NCTC 12712 / WDCM 00102 / Lb 14).